The following is a 140-amino-acid chain: Austinoid biosynthesis clusters protein S (140 aa).

It belongs to the trt14 isomerase family. In terms of assembly, homodimer.

It functions in the pathway secondary metabolite biosynthesis; terpenoid biosynthesis. Part of the gene cluster B that mediates the biosynthesis of austinol and dehydroaustinol, two fungal meroterpenoids. The first step of the pathway is the synthesis of 3,5-dimethylorsellinic acid by the polyketide synthase ausA. 3,5-dimethylorsellinic acid is then prenylated by the polyprenyl transferase ausN. Further epoxidation by the FAD-dependent monooxygenase ausM and cyclization by the probable terpene cyclase ausL lead to the formation of protoaustinoid A. Protoaustinoid A is then oxidized to spiro-lactone preaustinoid A3 by the combined action of the FAD-binding monooxygenases ausB and ausC, and the dioxygenase ausE. Acid-catalyzed keto-rearrangement and ring contraction of the tetraketide portion of preaustinoid A3 by ausJ lead to the formation of preaustinoid A4. The aldo-keto reductase ausK, with the help of ausH, is involved in the next step by transforming preaustinoid A4 into isoaustinone which is in turn hydroxylated by the P450 monooxygenase ausI to form austinolide. Finally, the cytochrome P450 monooxygenase ausG modifies austinolide to austinol. Austinol can be further modified to dehydroaustinol which forms a diffusible complex with diorcinol that initiates conidiation. Due to genetic rearrangements of the clusters and the subsequent loss of some enzymes, the end products of the Emericella nidulans austinoid biosynthesis clusters are austinol and dehydroaustinol, even if additional enzymes, such as the O-acetyltransferase ausQ and the cytochrome P450 monooxygenase ausR are still functional. AusS is necessary for austinoids production and may play a possible function as a regulator. This Emericella nidulans (strain FGSC A4 / ATCC 38163 / CBS 112.46 / NRRL 194 / M139) (Aspergillus nidulans) protein is Austinoid biosynthesis clusters protein S.